The sequence spans 236 residues: V-set and transmembrane domain-containing protein 2A (236 aa).

Positions 1–24 (MMGIFLVYVGFVFFSVLYVQQGLS) are cleaved as a signal peptide. The Ig-like V-type domain maps to 27–143 (AKFTEFPRNV…YGELQEHKAQ (117 aa)). N-linked (GlcNAc...) asparagine glycosylation is present at Asn35. The cysteines at positions 48 and 127 are disulfide-linked. Residue Asn175 is glycosylated (N-linked (GlcNAc...) asparagine). The span at 184-199 (IHGSANQRTHSTSSPQ) shows a compositional bias: polar residues. Residues 184–206 (IHGSANQRTHSTSSPQVVAKIPK) form a disordered region.

In terms of assembly, homodimer. Post-translationally, N-glycosylated. N-linked glycosylation is critical for secretion but not for preadipocyte cell differentiation activity.

It localises to the secreted. Its function is as follows. Plays a role in the regulation of the early stage of white and brown preadipocyte cell differentiation. Promotes adipogenic commitment of preadipocytes by increasing gene expression of the transcription factor PPARG in a BMP4-dependent signaling pathway. The protein is V-set and transmembrane domain-containing protein 2A of Homo sapiens (Human).